The chain runs to 395 residues: E3 ubiquitin-protein ligase RDUF1 (395 aa).

2 disordered regions span residues 1–22 (MMPN…TTTT) and 107–130 (PVIV…EGDG). Positions 9–22 (TITPTTESTTTTTT) are enriched in low complexity. Basic and acidic residues predominate over residues 121–130 (ERVENEEGDG). Residues 215–256 (CAVCTEVFEAGIEGREMPCKHIFHGDCIVPWLSIRNSCPVCR) form an RING-type; atypical zinc finger.

As to expression, expressed in root tips, leaf tips, junction of carpels and pedicels, stigma, anthers, pollen, vasculature of sepals and petals, immature seeds and embryos.

Its subcellular location is the cytoplasm. The protein localises to the cytosol. It is found in the nucleus. It carries out the reaction S-ubiquitinyl-[E2 ubiquitin-conjugating enzyme]-L-cysteine + [acceptor protein]-L-lysine = [E2 ubiquitin-conjugating enzyme]-L-cysteine + N(6)-ubiquitinyl-[acceptor protein]-L-lysine.. It participates in protein modification; protein ubiquitination. E3 ubiquitin-protein ligase involved in the positive regulation of abscisic acid-dependent drought stress responses. Involved in the positive regulation of responses to salt and osmotic stresses during seed germination and early seedling development. Possesses E3 ubiquitin ligase activity in vitro. The sequence is that of E3 ubiquitin-protein ligase RDUF1 from Arabidopsis thaliana (Mouse-ear cress).